The sequence spans 237 residues: Sulfhydrogenase 2 subunit delta (237 aa).

[4Fe-4S] cluster contacts are provided by cysteine 11, cysteine 14, cysteine 83, cysteine 132, cysteine 160, cysteine 163, cysteine 170, and cysteine 179. 4 residues coordinate [3Fe-4S] cluster: cysteine 188, cysteine 192, cysteine 199, and cysteine 202.

This sequence belongs to the [NiFe]/[NiFeSe] hydrogenase small subunit family. Dimer of heterotetramer of alpha, beta, gamma and delta subunits. The nickel-containing alpha and delta subunits constitute the hydrogenase activity. The beta and gamma subunits (flavin-containing dimer) constitute the sulfur reductase activity. Ni(2+) serves as cofactor. The cofactor is [4Fe-4S] cluster. It depends on [3Fe-4S] cluster as a cofactor.

The protein localises to the cytoplasm. It carries out the reaction H2 + NADP(+) = NADPH + H(+). It catalyses the reaction H2 + NAD(+) = NADH + H(+). In terms of biological role, part of a bifunctional enzyme complex that functions as a hydrogen-evolving hydrogenase with sulfur-reducing activity. May play a role in hydrogen cycling during fermentative growth. Activity exhibited with NAD in addition to NADPH. The alpha and delta subunits form the hydrogenase component that catalyzes the reduction of protons to evolve hydrogen. The polypeptide is Sulfhydrogenase 2 subunit delta (Pyrococcus furiosus (strain ATCC 43587 / DSM 3638 / JCM 8422 / Vc1)).